The primary structure comprises 216 residues: Protein Syd (216 aa).

The protein belongs to the Syd family.

The protein localises to the cell inner membrane. Functionally, interacts with the SecY protein in vivo. May bind preferentially to an uncomplexed state of SecY, thus functioning either as a chelating agent for excess SecY in the cell or as a regulatory factor that negatively controls the translocase function. This is Protein Syd from Shewanella frigidimarina (strain NCIMB 400).